The following is a 644-amino-acid chain: Protein DA1-related 6 (644 aa).

3 UIM domains span residues 119–138 (EEDE…NNRR), 181–200 (DVDE…KGKG), and 244–263 (DEDE…KGQI). One can recognise an LIM zinc-binding domain in the interval 284–355 (SLCGGCNFAV…YVCKEKKMKT (72 aa)). A compositionally biased stretch (low complexity) spans 572-589 (ASSSASSSSRTPPAASAS). The disordered stretch occupies residues 572–591 (ASSSASSSSRTPPAASASKK).

In terms of assembly, interacts with ubiquitin.

Ubiquitin receptor that probably regulates developmental process. This is Protein DA1-related 6 (DAR6) from Arabidopsis thaliana (Mouse-ear cress).